The primary structure comprises 255 residues: Imidazole glycerol phosphate synthase subunit HisF (255 aa).

Residues D11 and D130 contribute to the active site.

Belongs to the HisA/HisF family. As to quaternary structure, heterodimer of HisH and HisF.

Its subcellular location is the cytoplasm. The catalysed reaction is 5-[(5-phospho-1-deoxy-D-ribulos-1-ylimino)methylamino]-1-(5-phospho-beta-D-ribosyl)imidazole-4-carboxamide + L-glutamine = D-erythro-1-(imidazol-4-yl)glycerol 3-phosphate + 5-amino-1-(5-phospho-beta-D-ribosyl)imidazole-4-carboxamide + L-glutamate + H(+). It participates in amino-acid biosynthesis; L-histidine biosynthesis; L-histidine from 5-phospho-alpha-D-ribose 1-diphosphate: step 5/9. IGPS catalyzes the conversion of PRFAR and glutamine to IGP, AICAR and glutamate. The HisF subunit catalyzes the cyclization activity that produces IGP and AICAR from PRFAR using the ammonia provided by the HisH subunit. The protein is Imidazole glycerol phosphate synthase subunit HisF of Rhodopseudomonas palustris (strain BisB5).